The primary structure comprises 969 residues: Protein translocase subunit SecA (969 aa).

ATP-binding positions include Q99, 117 to 121 (GEGKT), and D631.

This sequence belongs to the SecA family. As to quaternary structure, monomer and homodimer. Part of the essential Sec protein translocation apparatus which comprises SecA, SecYEG and auxiliary proteins SecDF. Other proteins may also be involved.

The protein localises to the cell inner membrane. It is found in the cytoplasm. It catalyses the reaction ATP + H2O + cellular proteinSide 1 = ADP + phosphate + cellular proteinSide 2.. Functionally, part of the Sec protein translocase complex. Interacts with the SecYEG preprotein conducting channel. Has a central role in coupling the hydrolysis of ATP to the transfer of proteins into and across the cell membrane, serving as an ATP-driven molecular motor driving the stepwise translocation of polypeptide chains across the membrane. The sequence is that of Protein translocase subunit SecA from Chlamydia trachomatis serovar D (strain ATCC VR-885 / DSM 19411 / UW-3/Cx).